The primary structure comprises 3961 residues: Replicase polyprotein 1ab (3961 aa).

A C4-type; atypical zinc finger spans residues 8–28 (CTCTPNARVFVAEGQVYCTRC). The Peptidase C31 domain maps to 69 to 180 (ECSPAGACWL…EDFCPFECAM (112 aa)). Positions 69 to 182 (ECSPAGACWL…FCPFECAMAT (114 aa)) are PCP1-alpha. Catalysis depends on for Nsp1-alpha papain-like cysteine proteinase activity residues C76 and H146. Residues 199-200 (IS) are important for host EIF2AK2 inhibition. Residues 263-382 (DTVPEGNCWW…IFRFGSHKWY (120 aa)) form a PCP1-beta region. The 121-residue stretch at 263–383 (DTVPEGNCWW…FRFGSHKWYG (121 aa)) folds into the Peptidase C32 domain. Catalysis depends on for Nsp1-beta papain-like cysteine proteinase activity residues C270 and H339. The tract at residues 426–513 (LKHYSPPAEG…GEHWTVTVTP (88 aa)) is OTU-like. Positions 428–535 (HYSPPAEGNC…QGCCEHKGGL (108 aa)) constitute a Peptidase C33 domain. Active-site for Nsp2 cysteine proteinase activity residues include C437 and H506. Disordered regions lie at residues 809–862 (RWTP…NSWE), 898–979 (ATPL…GVLG), and 1153–1213 (NQEP…GGGP). Positions 810-819 (WTPPPPPPKV) are enriched in pro residues. Transmembrane regions (helical) follow at residues 1266–1286 (LCLFLCYSYPAFGIAPLLGVF), 1296–1316 (GVFGCWLAFAVGLFKPVSDPV), 1345–1365 (SLVVGPVGLGLAILGRLLGGA), 1368–1388 (IWHFLLRLGIVADCILAGAYV), 1583–1603 (LMAALHVACSMALHMLTGIYV), 1650–1670 (ALVAGFGIQEIALVVLIFVSI), 1685–1705 (CILLAIASYVWVPLTWLLCVF), and 1719–1739 (ILWLVFFLISVNMPSGILAMV). The interval 1266–1388 (LCLFLCYSYP…ADCILAGAYV (123 aa)) is HD1. Residues 1583–1745 (LMAALHVACS…LAMVLLVSLW (163 aa)) form an HD2 region. In terms of domain architecture, Peptidase S32 spans 1810-2013 (GAFRTRKPSL…ALLAAKPELE (204 aa)). Catalysis depends on charge relay system; for 3C-like serine proteinase activity residues H1848, D1873, and S1927. Helical transmembrane passes span 2012-2032 (LEGGLSTVQLLCVFFLLWRMM), 2060-2080 (FSFGMFVLSWLTPWSAQILMI), 2092-2112 (WSLAFFSLGAVTGFVADLAAT), 2137-2157 (SPVPVITCGVVHLLAIILYLF), and 2164-2184 (QILVGDGVFSAAFFLRYFAEG). The interval 2036–2157 (WTPLVAVSFF…HLLAIILYLF (122 aa)) is HD3. Positions 2329–2358 (PTPTPPPAPVPIPLPPKVLENGPNAWGDED) are disordered. Residues 2330–2344 (TPTPPPAPVPIPLPP) are compositionally biased toward pro residues. One can recognise a NiRAN domain in the interval 2488 to 2651 (IIDKLQGLTK…LPYKLYPVRG (164 aa)). Residues 2890-3024 (GRCLEADLAS…YAESPTMPNY (135 aa)) enclose the RdRp catalytic domain. Positions 3145–3208 (GKKSRVCGYC…SPVGKGTSPL (64 aa)) constitute an AV ZBD domain. Zn(2+)-binding residues include C3151, C3154, C3164, C3169, H3172, H3174, H3176, H3178, C3185, H3187, C3194, and C3197. In terms of domain architecture, (+)RNA virus helicase ATP-binding spans 3265 to 3417 (ASTALLPTCK…VFDIMPQTQL (153 aa)). 3298–3305 (GKTYWLLQ) contacts ATP. The 129-residue stretch at 3418–3546 (KTIWRFGQNI…AVHRDGQLIV (129 aa)) folds into the (+)RNA virus helicase C-terminal domain. The 97-residue stretch at 3585–3681 (EGSSSPLPKV…LTKFVKGEAQ (97 aa)) folds into the AV-Nsp11N/CoV-Nsp15M domain. The 123-residue stretch at 3683 to 3805 (LPETVFSTGR…MVWRDKTAYF (123 aa)) folds into the NendoU domain. Active-site residues include H3714, H3729, and K3758.

The protein belongs to the arteriviridae polyprotein family. Nsp1-alpha papain-like: Interacts with host RNF31. As to quaternary structure, interacts with host EIF2AK2; this interaction occurs in host stress granules and leads to EIF2AK2 inhibition. Interacts with host G3BP1; this interaction probably plays a role in Nsp1-beta-mediated inhibition of host EIF2AK2. In terms of assembly, interacts with host DDX18; this interaction redistributes host DDX18 to the cytoplasm. Interacts with host IFITM1. As to quaternary structure, interacts with host DDX5. In terms of assembly, interacts with host OTULIN. Interacts with host LGALS3. In terms of processing, specific enzymatic cleavages in vivo by its own proteases yield mature proteins. Nsp1 is autocleaved into two subunits, Nsp1-alpha and Nsp1-beta. There are two alternative pathways for processing. Either nsp4-5 is cleaved, which represents the major pathway or the nsp5-6 and nsp6-7 are processed, which represents the minor pathway. The major pathway occurs when nsp2 acts as a cofactor for nsp4.

Its subcellular location is the host nucleus. The protein localises to the host cytoplasm. It localises to the host membrane. The protein resides in the host endoplasmic reticulum. It is found in the host perinuclear region. It carries out the reaction RNA(n) + a ribonucleoside 5'-triphosphate = RNA(n+1) + diphosphate. The enzyme catalyses ATP + H2O = ADP + phosphate + H(+). The catalysed reaction is Thiol-dependent hydrolysis of ester, thioester, amide, peptide and isopeptide bonds formed by the C-terminal Gly of ubiquitin (a 76-residue protein attached to proteins as an intracellular targeting signal).. It catalyses the reaction uridylyl-uridylyl-ribonucleotide-RNA = a 3'-end uridylyl-2',3'-cyclophospho-uridine-RNA + a 5'-end dephospho-ribonucleoside-RNA. Functionally, contains the activities necessary for the transcription of negative stranded RNA, leader RNA, subgenomic mRNAs and progeny virion RNA as well as proteinases responsible for the cleavage of the polyprotein into functional products. Inhibits host IFN-beta production. Plays a role in the degradation of the host transcriptional activator CREBBP protein. The degradation of host CREBBP which is a key component of the IFN enhanceosome is likely responsible for the inhibition of interferon mediated by Nsp1-alpha. Also participates in the inhibition of host NF-kappa-B activation by counteracting LUBAC-dependent induction of NF-kappa-B. Reduces host NEMO ubiquitination by blocking the interaction between the two LUBAC complex components RNF31 and SHARPIN. In terms of biological role, plays a role in blocking host mRNA nuclear export to the cytoplasm and subversion of host protein synthesis. Additionally, inhibits the interferon-activated JAK/STAT signal transduction by mediating the ubiquitination and subsequent proteasomal degradation of host KPNA1. Repurposes the host antiviral stress granules into a proviral platform to counteract the EIF2AK2/PKR restriction, thereby regulating the host inflammatory response. Its function is as follows. Multifunctional protein that acts as a viral protease and as a viral antagonist of host immune response. Cleaves the nsp2/nsp3 site in the viral polyprotein. Displays deubiquitinating activity that cleaves both ubiquitinated and ISGylated products and therefore inhibits ubiquitin and ISG15-dependent host innate immunity. Also deubiquinates host NFKBIA, thereby interfering with NFKBIA degradation and impairing subsequent NF-kappa-B activation. Functionally, plays a role in the inhibition of the immune response by interacting with host IFITM1. This interaction leads to the proteasomal degradation of the IFN-induced antiviral protein IFITM1. Cleaves the majority of cleavage sites present in the C-terminus of the polyprotein. Triggers host apoptosis through caspase-3, -8, and -9 activations. Subverts host innate immune responses through its protease activity. Targets the NF-kappa-B essential modulator NEMO and mediates its cleavage. Blocks host interferon beta induction and downstream signaling by cleaving mitochondrial MAVS, dislodging it from the mitochondria. Impairs host defense by cleaving host mRNA-decapping enzyme DCP1A to attenuate its antiviral activity. In terms of biological role, plays a role in the initial induction of autophagosomes from host endoplasmic reticulum. Its function is as follows. Plays a role in the inhibition of host STAT3 signaling pathway by inducing the degradation of STAT3. Functionally, responsible for replication and transcription of the viral RNA genome. Displays RNA and DNA duplex-unwinding activities with 5' to 3' polarity. In terms of biological role, plays a role in viral transcription/replication and prevents the simultaneous activation of host cell dsRNA sensors, such as MDA5/IFIH1, OAS, PKR and NLRP3 inflammasome. Acts by degrading the 5'-polyuridines generated during replication of the poly(A) region of viral genomic and subgenomic RNAs. Catalyzes a two-step reaction in which a 2'3'-cyclic phosphate (2'3'-cP) is first generated by 2'-O transesterification, which is then hydrolyzed to a 3'-phosphate (3'-P). If not degraded, poly(U) RNA would hybridize with poly(A) RNA tails and activate host dsRNA sensors. Also plays a role in the inhibition of host type I interferon production by recruiting host OTULIN to promote removal of linear ubiquitination targeting host NEMO. This Porcine reproductive and respiratory syndrome virus (strain 16244B) (PRRSV) protein is Replicase polyprotein 1ab (rep).